A 295-amino-acid chain; its full sequence is Sulfotransferase 1A2 (295 aa).

48–53 (KSGTTW) lines the 3'-phosphoadenylyl sulfate pocket. 106-108 (KTH) serves as a coordination point for substrate. H108 serves as the catalytic Proton acceptor. 3'-phosphoadenylyl sulfate contacts are provided by residues R130, S138, Y193, 227 to 232 (TSFKEM), and 255 to 259 (FMRKG).

Belongs to the sulfotransferase 1 family. As to quaternary structure, homodimer.

It localises to the cytoplasm. The catalysed reaction is a phenol + 3'-phosphoadenylyl sulfate = an aryl sulfate + adenosine 3',5'-bisphosphate + H(+). Functionally, sulfotransferase that utilizes 3'-phospho-5'-adenylyl sulfate (PAPS) as sulfonate donor to catalyze the sulfate conjugation of catecholamines, phenolic drugs and neurotransmitters. Is also responsible for the sulfonation and activation of minoxidil. Mediates the metabolic activation of carcinogenic N-hydroxyarylamines to DNA binding products and could so participate as modulating factor of cancer risk. This Homo sapiens (Human) protein is Sulfotransferase 1A2 (SULT1A2).